Consider the following 172-residue polypeptide: Small ribosomal subunit protein uS5 (172 aa).

The S5 DRBM domain maps to 17 to 80 (MREKMIAVNR…EECRRNLVKV (64 aa)).

Belongs to the universal ribosomal protein uS5 family. Part of the 30S ribosomal subunit. Contacts proteins S4 and S8.

With S4 and S12 plays an important role in translational accuracy. In terms of biological role, located at the back of the 30S subunit body where it stabilizes the conformation of the head with respect to the body. The sequence is that of Small ribosomal subunit protein uS5 from Paracidovorax citrulli (strain AAC00-1) (Acidovorax citrulli).